Consider the following 430-residue polypeptide: Asparagine--tRNA ligase (430 aa).

The protein belongs to the class-II aminoacyl-tRNA synthetase family. As to quaternary structure, homodimer.

Its subcellular location is the cytoplasm. It carries out the reaction tRNA(Asn) + L-asparagine + ATP = L-asparaginyl-tRNA(Asn) + AMP + diphosphate + H(+). The sequence is that of Asparagine--tRNA ligase from Staphylococcus aureus (strain JH1).